Here is a 180-residue protein sequence, read N- to C-terminus: Inner membrane-spanning protein YciB (180 aa).

5 helical membrane-spanning segments follow: residues Gln25 to Val45, Ile54 to Ile74, Ile76 to Ile96, Ile118 to Val138, and Phe150 to Leu170.

Belongs to the YciB family.

It localises to the cell inner membrane. Plays a role in cell envelope biogenesis, maintenance of cell envelope integrity and membrane homeostasis. The sequence is that of Inner membrane-spanning protein YciB from Rickettsia canadensis (strain McKiel).